The sequence spans 209 residues: MAEICKMKYTVLDSPLGKIELSGCERGLHGIRFLSGKTPNTDPTEAPACPEVLGGPEGVPEPLVQCTAWLEAYFHEPAATEGLPLPALHHPVFQQDSFTRQVLWKLLKVVKFGEMVSYQQLAALAGNPKAARAVGGAMRSNPVPILIPCHRVIRSDGAIGNYSGGGQTVKEWLLAHEGIPTGQPASKGLGLIGSWLKPSFESSSPKPSG.

Cys5 is a Zn(2+) binding site. Ser14 bears the Phosphoserine mark. 3 residues coordinate Zn(2+): Cys24, His29, and His89. Thr99, Tyr118, Gln119, Asn127, and Arg132 together coordinate DNA. The active-site Nucleophile; methyl group acceptor is Cys149. Residue Ser155 participates in DNA binding.

Belongs to the MGMT family. Zn(2+) serves as cofactor.

The protein resides in the nucleus. It carries out the reaction a 6-O-methyl-2'-deoxyguanosine in DNA + L-cysteinyl-[protein] = S-methyl-L-cysteinyl-[protein] + a 2'-deoxyguanosine in DNA. The catalysed reaction is a 4-O-methyl-thymidine in DNA + L-cysteinyl-[protein] = a thymidine in DNA + S-methyl-L-cysteinyl-[protein]. In terms of biological role, involved in the cellular defense against the biological effects of O6-methylguanine (O6-MeG) and O4-methylthymine (O4-MeT) in DNA. Repairs the methylated nucleobase in DNA by stoichiometrically transferring the methyl group to a cysteine residue in the enzyme. This is a suicide reaction: the enzyme is irreversibly inactivated. This Rattus norvegicus (Rat) protein is Methylated-DNA--protein-cysteine methyltransferase (Mgmt).